A 448-amino-acid polypeptide reads, in one-letter code: Protein chibby homolog 2 (448 aa).

Phosphoserine is present on residues S41, S86, S89, S97, S124, S144, S148, and S150. The stretch at 164 to 198 (KECMLQEENKSLREENKALREENRMLSKENKILQV) forms a coiled coil. Phosphoserine is present on residues S212 and S225. A coiled-coil region spans residues 242-267 (KEDSTLQLLREENRALQQLLEQKQAY). The interval 270–323 (QAEDTAAPAEESKPAPSPHEEPCSPGLLQDQGSGLSSRFEEPKGPPARQEDSKE) is disordered. Composition is skewed to basic and acidic residues over residues 279-291 (EESK…HEEP) and 307-323 (RFEE…DSKE). A phosphoserine mark is found at S335 and S338. Residues 356–414 (LQLLREMRQALQALLKENRLLQEENRTLQVLRAEHRGFQEENKALWENNKLKLQQKLVI) are a coiled coil.

The protein belongs to the chibby family. SPERT subfamily. Homodimer. Binds to NEK1. As to expression, testis-specific.

In Homo sapiens (Human), this protein is Protein chibby homolog 2.